A 228-amino-acid polypeptide reads, in one-letter code: Urease accessory protein UreE (228 aa).

Residues 188–228 (PLDEPHGSGLHIHAIHSHGDGHSHDHDHSHSHGDHDHDHKH) form a disordered region. Residues 204–228 (SHGDGHSHDHDHSHSHGDHDHDHKH) are compositionally biased toward basic and acidic residues.

It belongs to the UreE family.

The protein resides in the cytoplasm. In terms of biological role, involved in urease metallocenter assembly. Binds nickel. Probably functions as a nickel donor during metallocenter assembly. This is Urease accessory protein UreE from Yersinia kristensenii.